A 1337-amino-acid chain; its full sequence is Nucleoporin POM152 (1337 aa).

The disordered stretch occupies residues 1–48 (MEHRYNVFNDTPRGNHWMGSSVSGSPRPSYSSRPNVNTTRRFQYSDDE). Residues 1–110 (MEHRYNVFND…TDVLEISKQR (110 aa)) are Cytoplasmic-facing. Residues 1 to 175 (MEHRYNVFND…SFNIPRLTFK (175 aa)) are pore side. A compositionally biased stretch (low complexity) spans 19–37 (GSSVSGSPRPSYSSRPNVN). Phosphoserine is present on residues Ser-45 and Ser-60. A helical membrane pass occupies residues 111–131 (TFAVILFLIIQCYKIYDLVIL). At 132–148 (KSGLPLSGLLFKNYRFN) the chain is on the perinuclear space side. The helical transmembrane segment at 149–169 (FISKYFIIDSFFLYVLPSFNI) threads the bilayer. The Cytoplasmic portion of the chain corresponds to 170–172 (PRL). A helical transmembrane segment spans residues 173-193 (TFKPWVVYLQILAMLLLNIFI). The Perinuclear space portion of the chain corresponds to 194-1337 (SSDHEFVLIS…FAKNDLFFNN (1144 aa)). The cisternal side stretch occupies residues 196 to 1337 (DHEFVLISLI…FAKNDLFFNN (1142 aa)). The N-linked (GlcNAc...) asparagine glycan is linked to Asn-280. Repeat copies occupy residues 390-413 (DRCIGDSDNVSFEIQGVPPMKLAY), 626-650 (DQCVGQVGLNFELSFTGAPPYYYNT), 732-755 (KLCLGDHSSVPVALKGQGPFTLTY), 836-859 (KIKHGSVTEIPLKLSGEGPFTVKF), 943-966 (EVCQGMEGTVDLALFGSPPFILEY), 1058-1077 (FLEPINLKFLQGESPFSITF), 1157-1178 (EYCVGDYVAYQLNGVAPFMIKY), and 1253-1276 (DIREGDQAEVIFSFEGTPPFSLTY). The interval 390-1276 (DRCIGDSDNV…EGTPPFSLTY (887 aa)) is 8 X 24 AA approximate repeats.

Component of the nuclear pore complex (NPC). NPC constitutes the exclusive means of nucleocytoplasmic transport. NPCs allow the passive diffusion of ions and small molecules and the active, nuclear transport receptor-mediated bidirectional transport of macromolecules such as proteins, RNAs, ribonucleoparticles (RNPs), and ribosomal subunits across the nuclear envelope. Due to its 8-fold rotational symmetry, all subunits are present with 8 copies or multiples thereof. Interacts with NUP188. In terms of processing, the N-terminus is blocked. Post-translationally, phosphorylated by CDC28.

The protein localises to the nucleus. The protein resides in the nuclear pore complex. It localises to the nucleus membrane. Its function is as follows. Functions as a component of the nuclear pore complex (NPC). NPC components, collectively referred to as nucleoporins (NUPs), can play the role of both NPC structural components and of docking or interaction partners for transiently associated nuclear transport factors. POM152 is important for the de novo assembly of NPCs. This chain is Nucleoporin POM152 (POM152), found in Saccharomyces cerevisiae (strain ATCC 204508 / S288c) (Baker's yeast).